Here is a 268-residue protein sequence, read N- to C-terminus: Nickel import ATP-binding protein NikE (268 aa).

The ABC transporter domain occupies 4–252; the sequence is LNVSGLSHHY…SSDAGRVLQN (249 aa). 45-52 provides a ligand contact to ATP; the sequence is GRSGCGKS.

The protein belongs to the ABC transporter superfamily. Nickel importer (TC 3.A.1.5.3) family. As to quaternary structure, the complex is composed of two ATP-binding proteins (NikD and NikE), two transmembrane proteins (NikB and NikC) and a solute-binding protein (NikA).

Its subcellular location is the cell inner membrane. It carries out the reaction Ni(2+)(out) + ATP + H2O = Ni(2+)(in) + ADP + phosphate + H(+). In terms of biological role, part of the ABC transporter complex NikABCDE involved in nickel import. Responsible for energy coupling to the transport system. This is Nickel import ATP-binding protein NikE from Shigella sonnei (strain Ss046).